A 378-amino-acid polypeptide reads, in one-letter code: Phospho-N-acetylmuramoyl-pentapeptide-transferase (378 aa).

A run of 10 helical transmembrane segments spans residues 27 to 47 (TAFASLTALFLCIALGPWLIN), 74 to 94 (TMGGVLIVISIVIPTLLWADL), 96 to 116 (YPYVWIALAGLLGYGWIGFLD), 135 to 155 (LVYQFIMGFAFAASLLVMRAY), 184 to 204 (WTYVIGVAPFCIFVALVVVFY), 216 to 236 (GLAIGLMVIAAGALTVLAYAG), 256 to 276 (LTIFCGSMTGASLGFLWYNAH), 280 to 300 (IFMGDVGSLGLGGAMAVVAVL), 305 to 325 (ILLLFIGGIFVLEAFSVILQV), and 355 to 375 (KIIARFWIAGLVLALFALTTL).

It belongs to the glycosyltransferase 4 family. MraY subfamily. Requires Mg(2+) as cofactor.

It is found in the cell inner membrane. It catalyses the reaction UDP-N-acetyl-alpha-D-muramoyl-L-alanyl-gamma-D-glutamyl-meso-2,6-diaminopimeloyl-D-alanyl-D-alanine + di-trans,octa-cis-undecaprenyl phosphate = di-trans,octa-cis-undecaprenyl diphospho-N-acetyl-alpha-D-muramoyl-L-alanyl-D-glutamyl-meso-2,6-diaminopimeloyl-D-alanyl-D-alanine + UMP. The protein operates within cell wall biogenesis; peptidoglycan biosynthesis. Catalyzes the initial step of the lipid cycle reactions in the biosynthesis of the cell wall peptidoglycan: transfers peptidoglycan precursor phospho-MurNAc-pentapeptide from UDP-MurNAc-pentapeptide onto the lipid carrier undecaprenyl phosphate, yielding undecaprenyl-pyrophosphoryl-MurNAc-pentapeptide, known as lipid I. The polypeptide is Phospho-N-acetylmuramoyl-pentapeptide-transferase (Solibacter usitatus (strain Ellin6076)).